We begin with the raw amino-acid sequence, 97 residues long: Exodeoxyribonuclease 7 small subunit (97 aa).

The tract at residues 1–22 is disordered; the sequence is MAKTASPGATPPGNGTEPLPDN.

The protein belongs to the XseB family. In terms of assembly, heterooligomer composed of large and small subunits.

The protein localises to the cytoplasm. It carries out the reaction Exonucleolytic cleavage in either 5'- to 3'- or 3'- to 5'-direction to yield nucleoside 5'-phosphates.. Functionally, bidirectionally degrades single-stranded DNA into large acid-insoluble oligonucleotides, which are then degraded further into small acid-soluble oligonucleotides. The chain is Exodeoxyribonuclease 7 small subunit from Burkholderia cenocepacia (strain HI2424).